The following is a 237-amino-acid chain: 7-cyano-7-deazaguanine synthase (237 aa).

An ATP-binding site is contributed by 14-24 (FSGGQDSATCL). Zn(2+) is bound by residues Cys202, Cys217, Cys220, and Cys223.

Belongs to the QueC family. Requires Zn(2+) as cofactor.

The enzyme catalyses 7-carboxy-7-deazaguanine + NH4(+) + ATP = 7-cyano-7-deazaguanine + ADP + phosphate + H2O + H(+). It functions in the pathway purine metabolism; 7-cyano-7-deazaguanine biosynthesis. Functionally, catalyzes the ATP-dependent conversion of 7-carboxy-7-deazaguanine (CDG) to 7-cyano-7-deazaguanine (preQ(0)). The protein is 7-cyano-7-deazaguanine synthase of Rhodopseudomonas palustris (strain ATCC BAA-98 / CGA009).